Here is a 285-residue protein sequence, read N- to C-terminus: UPF0703 protein YcgQ (285 aa).

4 helical membrane-spanning segments follow: residues 4 to 24 (LLVLMGFTFFFYHLHASGNLT), 34 to 54 (LSFIAIFLLAILTAVQAYLFI), 89 to 109 (LIYVVFLFPLVSGIFFPIATL), and 210 to 230 (FVLRFGIIHCIADSGVYGMLV).

Belongs to the UPF0703 family.

The protein resides in the cell membrane. The chain is UPF0703 protein YcgQ (ycgQ) from Bacillus subtilis (strain 168).